The following is a 687-amino-acid chain: Glycine--tRNA ligase beta subunit (687 aa).

The protein belongs to the class-II aminoacyl-tRNA synthetase family. As to quaternary structure, tetramer of two alpha and two beta subunits.

The protein resides in the cytoplasm. It carries out the reaction tRNA(Gly) + glycine + ATP = glycyl-tRNA(Gly) + AMP + diphosphate. The protein is Glycine--tRNA ligase beta subunit of Neisseria gonorrhoeae (strain ATCC 700825 / FA 1090).